A 73-amino-acid polypeptide reads, in one-letter code: UPF0346 protein SH1485 (73 aa).

The protein belongs to the UPF0346 family.

This Staphylococcus haemolyticus (strain JCSC1435) protein is UPF0346 protein SH1485.